The chain runs to 469 residues: 3-isopropylmalate dehydratase large subunit (469 aa).

[4Fe-4S] cluster contacts are provided by C349, C410, and C413.

This sequence belongs to the aconitase/IPM isomerase family. LeuC type 1 subfamily. As to quaternary structure, heterodimer of LeuC and LeuD. The cofactor is [4Fe-4S] cluster.

It catalyses the reaction (2R,3S)-3-isopropylmalate = (2S)-2-isopropylmalate. It participates in amino-acid biosynthesis; L-leucine biosynthesis; L-leucine from 3-methyl-2-oxobutanoate: step 2/4. In terms of biological role, catalyzes the isomerization between 2-isopropylmalate and 3-isopropylmalate, via the formation of 2-isopropylmaleate. The protein is 3-isopropylmalate dehydratase large subunit of Aromatoleum aromaticum (strain DSM 19018 / LMG 30748 / EbN1) (Azoarcus sp. (strain EbN1)).